The sequence spans 260 residues: Enoyl-[acyl-carrier-protein] reductase [NADH] FabI (260 aa).

NAD(+)-binding positions include G13, 19 to 20 (SI), Q40, 64 to 65 (DV), and I92. Catalysis depends on proton acceptor residues Y146 and Y156. NAD(+)-binding positions include K163 and 192–196 (IKTTS).

The protein belongs to the short-chain dehydrogenases/reductases (SDR) family. FabI subfamily. In terms of assembly, homotetramer.

The catalysed reaction is a 2,3-saturated acyl-[ACP] + NAD(+) = a (2E)-enoyl-[ACP] + NADH + H(+). The protein operates within lipid metabolism; fatty acid biosynthesis. Its pathway is cofactor biosynthesis; biotin biosynthesis. Its function is as follows. Catalyzes the reduction of a carbon-carbon double bond in an enoyl moiety that is covalently linked to an acyl carrier protein (ACP). Involved in the elongation cycle of fatty acid which are used in the lipid metabolism and in the biotin biosynthesis. This is Enoyl-[acyl-carrier-protein] reductase [NADH] FabI (fabI) from Buchnera aphidicola subsp. Schizaphis graminum (strain Sg).